Consider the following 236-residue polypeptide: Ubiquinone biosynthesis O-methyltransferase (236 aa).

The S-adenosyl-L-methionine site is built by Arg40, Gly59, Asp80, and Leu124.

It belongs to the methyltransferase superfamily. UbiG/COQ3 family.

It carries out the reaction a 3-demethylubiquinol + S-adenosyl-L-methionine = a ubiquinol + S-adenosyl-L-homocysteine + H(+). The enzyme catalyses a 3-(all-trans-polyprenyl)benzene-1,2-diol + S-adenosyl-L-methionine = a 2-methoxy-6-(all-trans-polyprenyl)phenol + S-adenosyl-L-homocysteine + H(+). The protein operates within cofactor biosynthesis; ubiquinone biosynthesis. In terms of biological role, O-methyltransferase that catalyzes the 2 O-methylation steps in the ubiquinone biosynthetic pathway. The chain is Ubiquinone biosynthesis O-methyltransferase from Saccharophagus degradans (strain 2-40 / ATCC 43961 / DSM 17024).